A 273-amino-acid chain; its full sequence is Putative pyruvate, phosphate dikinase regulatory protein (273 aa).

Glycine 153–serine 160 contributes to the ADP binding site.

It belongs to the pyruvate, phosphate/water dikinase regulatory protein family. PDRP subfamily.

The enzyme catalyses N(tele)-phospho-L-histidyl/L-threonyl-[pyruvate, phosphate dikinase] + ADP = N(tele)-phospho-L-histidyl/O-phospho-L-threonyl-[pyruvate, phosphate dikinase] + AMP + H(+). The catalysed reaction is N(tele)-phospho-L-histidyl/O-phospho-L-threonyl-[pyruvate, phosphate dikinase] + phosphate + H(+) = N(tele)-phospho-L-histidyl/L-threonyl-[pyruvate, phosphate dikinase] + diphosphate. Bifunctional serine/threonine kinase and phosphorylase involved in the regulation of the pyruvate, phosphate dikinase (PPDK) by catalyzing its phosphorylation/dephosphorylation. In Ehrlichia canis (strain Jake), this protein is Putative pyruvate, phosphate dikinase regulatory protein.